A 157-amino-acid polypeptide reads, in one-letter code: Transcriptional regulator MraZ (157 aa).

SpoVT-AbrB domains follow at residues 7-54 (TYTM…GTSL) and 83-126 (TEML…EPER).

This sequence belongs to the MraZ family. In terms of assembly, forms oligomers.

Its subcellular location is the cytoplasm. It is found in the nucleoid. The protein is Transcriptional regulator MraZ of Azorhizobium caulinodans (strain ATCC 43989 / DSM 5975 / JCM 20966 / LMG 6465 / NBRC 14845 / NCIMB 13405 / ORS 571).